The following is a 185-amino-acid chain: Ribosome-recycling factor (185 aa).

It belongs to the RRF family.

The protein resides in the cytoplasm. In terms of biological role, responsible for the release of ribosomes from messenger RNA at the termination of protein biosynthesis. May increase the efficiency of translation by recycling ribosomes from one round of translation to another. This is Ribosome-recycling factor from Shewanella piezotolerans (strain WP3 / JCM 13877).